A 213-amino-acid chain; its full sequence is Probable nicotinate-nucleotide adenylyltransferase (213 aa).

Residues 194–213 (RKPNNGEAKDGDVKDEEAVR) are disordered. Residues 200-213 (EAKDGDVKDEEAVR) show a composition bias toward basic and acidic residues.

It belongs to the NadD family.

It catalyses the reaction nicotinate beta-D-ribonucleotide + ATP + H(+) = deamido-NAD(+) + diphosphate. It functions in the pathway cofactor biosynthesis; NAD(+) biosynthesis; deamido-NAD(+) from nicotinate D-ribonucleotide: step 1/1. Catalyzes the reversible adenylation of nicotinate mononucleotide (NaMN) to nicotinic acid adenine dinucleotide (NaAD). The sequence is that of Probable nicotinate-nucleotide adenylyltransferase from Mycolicibacterium smegmatis (strain ATCC 700084 / mc(2)155) (Mycobacterium smegmatis).